The primary structure comprises 439 residues: Acyl transferase 7 (439 aa).

The interval 1-25 (MAAAAPDKAVERLSQKLVHPSSPTP) is disordered. Residues His176 and Asp383 each act as proton acceptor in the active site.

This sequence belongs to the plant acyltransferase family.

In terms of biological role, involved in the incorporation of ferulate into the cell wall. May act as arabinoxylan feruloyl transferase. The chain is Acyl transferase 7 from Oryza sativa subsp. japonica (Rice).